The sequence spans 219 residues: MKRLVLISLVLAAGCSTVPPTNVHQPMTARPSPRFEMANGNGSIYQAASSRPLFEDRRARFVGDTITVKITESTTASTKSNNKVDQSNAQKYGLGASTGMFGRVLPGAMDMSASSSTAFSGKGEAANNNIFTGNMTVTVIDVMPNGNLLVSGEKQVAIGSEQEFVRISGVVNPSFVDAFNVVDSSKIADARIEYKSSGQVSDGQVMGWLARFFLNVMPF.

The first 14 residues, 1–14 (MKRLVLISLVLAAG), serve as a signal peptide directing secretion. Cys15 carries N-palmitoyl cysteine lipidation. Cys15 is lipidated: S-diacylglycerol cysteine.

It belongs to the FlgH family. In terms of assembly, the basal body constitutes a major portion of the flagellar organelle and consists of four rings (L,P,S, and M) mounted on a central rod.

The protein resides in the cell outer membrane. It localises to the bacterial flagellum basal body. Assembles around the rod to form the L-ring and probably protects the motor/basal body from shearing forces during rotation. This Dechloromonas aromatica (strain RCB) protein is Flagellar L-ring protein.